Reading from the N-terminus, the 1871-residue chain is Plexin-A3 (1871 aa).

A signal peptide spans 1 to 19 (MPSVCLLLLLFLAVGGALG). Residues 20–488 (NRPFRAFVVT…SEKQVSQLPV (469 aa)) enclose the Sema domain. The Extracellular segment spans residues 20–1220 (NRPFRAFVVT…SAERALTLPA (1201 aa)). A glycan (N-linked (GlcNAc...) asparagine) is linked at asparagine 59. 9 disulfides stabilise this stretch: cysteine 77/cysteine 86, cysteine 112/cysteine 120, cysteine 266/cysteine 387, cysteine 282/cysteine 338, cysteine 356/cysteine 375, cysteine 491/cysteine 508, cysteine 497/cysteine 539, cysteine 500/cysteine 517, and cysteine 511/cysteine 523. An N-linked (GlcNAc...) asparagine glycan is attached at asparagine 548. Residues cysteine 574 and cysteine 594 are joined by a disulfide bond. Residues asparagine 637, asparagine 738, and asparagine 746 are each glycosylated (N-linked (GlcNAc...) asparagine). IPT/TIG domains are found at residues 840 to 933 (PRIT…YSFV), 935 to 1020 (PTFD…YTYT), 1023 to 1122 (PTVT…FTYY), and 1125 to 1211 (PSFE…LHIS). N-linked (GlcNAc...) asparagine glycans are attached at residues asparagine 1009, asparagine 1036, asparagine 1073, asparagine 1115, and asparagine 1162. Residues 1221–1241 (MMGLAAGGGLLLLAITAVLVA) traverse the membrane as a helical segment. The Cytoplasmic portion of the chain corresponds to 1242-1871 (YKRKTQDADR…QIISLVSSDS (630 aa)). Serine 1596 bears the Phosphoserine mark.

This sequence belongs to the plexin family. As to quaternary structure, interacts with CBFA2T3/MTG16.

It localises to the cell membrane. Coreceptor for SEMA3A and SEMA3F. Necessary for signaling by class 3 semaphorins and subsequent remodeling of the cytoskeleton. Plays a role in axon guidance in the developing nervous system. Regulates the migration of sympathetic neurons, but not of neural crest precursors. Required for normal dendrite spine morphology in pyramidal neurons. May play a role in regulating semaphorin-mediated programmed cell death in the developing nervous system. Class 3 semaphorins bind to a complex composed of a neuropilin and a plexin. The plexin modulates the affinity of the complex for specific semaphorins, and its cytoplasmic domain is required for the activation of down-stream signaling events in the cytoplasm. In Homo sapiens (Human), this protein is Plexin-A3 (PLXNA3).